Reading from the N-terminus, the 311-residue chain is Vomeronasal type-1 receptor 105 (311 aa).

Residues 1-17 (MMNKNSRLYTDSNIRNT) lie on the Extracellular side of the membrane. The helical transmembrane segment at 18-38 (FFAEIGIGVSANSLLLLFNIF) threads the bilayer. The Cytoplasmic segment spans residues 39-50 (KLICGQRSRLTD). A helical transmembrane segment spans residues 51 to 71 (LPIGLLSLINLLMLLMTAFIA). Residues 72 to 94 (TDTFISWRGWDDIICKSLLYLYR) are Extracellular-facing. A disulfide bridge connects residues cysteine 86 and cysteine 173. The chain crosses the membrane as a helical span at residues 95-115 (TFRGLSLCTSCLLSVLQAIIL). The Cytoplasmic segment spans residues 116–135 (SPRSSCLAKFKHKPSHHISC). The helical transmembrane segment at 136–156 (AILSLSVLYMFISSHLLVSII) threads the bilayer. The Extracellular segment spans residues 157 to 188 (ATPNLTTNDFIHVTQWCSILPMSYLMQSMFST). Asparagine 160 carries N-linked (GlcNAc...) asparagine glycosylation. The helical transmembrane segment at 189-209 (LLAIRDVFLISLMVLSTWYMV) threads the bilayer. At 210 to 239 (ALLCRHRKQTRHLQGTSLSPKASPEQRATR) the chain is on the cytoplasmic side. Residues 240-260 (SILMLMSLFVLMSVFDSIVCS) form a helical membrane-spanning segment. The Extracellular segment spans residues 261–271 (SRTMYLNDPIS). The helical transmembrane segment at 272 to 292 (YSYQLFMVHIYATVSPFVFIV) threads the bilayer. At 293–311 (TEKHIVNSLRSMCVKVMNV) the chain is on the cytoplasmic side.

This sequence belongs to the G-protein coupled receptor 1 family. Expressed in 1-4% of neurons of the vomeronasal organ. Only one pheromone receptor gene may be expressed in a particular neuron. Not expressed in the main olfactory epithelium.

Its subcellular location is the cell membrane. Its function is as follows. Putative pheromone receptor implicated in the regulation of social as well as reproductive behavior. This is Vomeronasal type-1 receptor 105 (Vom1r105) from Rattus norvegicus (Rat).